The sequence spans 116 residues: Putative antiporter subunit mnhC2 (116 aa).

The next 3 membrane-spanning stretches (helical) occupy residues 3 to 23, 28 to 48, and 72 to 92; these read LILLLVIGFLVFIGTYMILSL, IVIGISIYTHAGNLIIMSMGH, and AIVLTAIVIGFAMTAFLLVLV.

Belongs to the CPA3 antiporters (TC 2.A.63) subunit C family. As to quaternary structure, may form a heterooligomeric complex that consists of seven subunits: mnhA2, mnhB2, mnhC2, mnhD2, mnhE2, mnhF2 and mnhG2.

The protein localises to the cell membrane. In Staphylococcus haemolyticus (strain JCSC1435), this protein is Putative antiporter subunit mnhC2 (mnhC2).